Reading from the N-terminus, the 450-residue chain is Tubulin beta-3 chain (450 aa).

Residues 1–4 (MREI) carry the MREI motif motif. 4 residues coordinate GDP: Gly10, Gln11, Cys12, and Gln15. Gln11 is a binding site for GTP. Residue Glu69 participates in GTP binding. Glu69 serves as a coordination point for Mg(2+). The GDP site is built by Asn99, Ser138, Gly142, Thr143, and Gly144. Residues Ser138, Gly142, Thr143, and Gly144 each coordinate GTP. Ser172 carries the post-translational modification Phosphoserine; by CDK1. GDP is bound by residues Asp177, Asn204, Tyr222, and Asn226. A GTP-binding site is contributed by Asn204. Asn226 is a binding site for GTP. Residues 425–450 (YQDATAEEEGEMYEDDEEESEAQGPK) form a disordered region. Over residues 429–450 (TAEEEGEMYEDDEEESEAQGPK) the composition is skewed to acidic residues. Glu438 carries the post-translational modification 5-glutamyl polyglutamate. Ser444 carries the post-translational modification Phosphoserine.

This sequence belongs to the tubulin family. In terms of assembly, heterodimer of alpha- and beta-tubulin. A typical microtubule is a hollow water-filled tube with an outer diameter of 25 nm and an inner diameter of 15 nM. Alpha-beta heterodimers associate head-to-tail to form protofilaments running lengthwise along the microtubule wall with the beta-tubulin subunit facing the microtubule plus end conferring a structural polarity. Microtubules usually have 13 protofilaments but different protofilament numbers can be found in some organisms and specialized cells. Interacts with gamma-tubulin; the interaction allows microtubules to nucleate from the gamma-tubulin ring complex (gTuRC). Interacts with UNC5C (via cytoplasmic domain); this interaction is decreased by NTN1/Netrin-1. Interacts with NLRP5/MATER at cytoskeleton microtubules. Interacts with DPYSL5. Interacts with CFAP61. Mg(2+) is required as a cofactor. In terms of processing, some glutamate residues at the C-terminus are polyglutamylated, resulting in polyglutamate chains on the gamma-carboxyl group. Polyglutamylation plays a key role in microtubule severing by spastin (SPAST). SPAST preferentially recognizes and acts on microtubules decorated with short polyglutamate tails: severing activity by SPAST increases as the number of glutamates per tubulin rises from one to eight, but decreases beyond this glutamylation threshold. Glutamylation is also involved in cilia motility. Some glutamate residues at the C-terminus are monoglycylated but not polyglycylated due to the absence of functional TTLL10 in human. Monoglycylation is mainly limited to tubulin incorporated into cilia and flagella axonemes, which is required for their stability and maintenance. Flagella glycylation controls sperm motility. Both polyglutamylation and monoglycylation can coexist on the same protein on adjacent residues, and lowering glycylation levels increases polyglutamylation, and reciprocally. Post-translationally, phosphorylated on Ser-172 by CDK1 during the cell cycle, from metaphase to telophase, but not in interphase. This phosphorylation inhibits tubulin incorporation into microtubules. As to expression, expression is primarily restricted to central and peripheral nervous system. Greatly increased expression in most cancerous tissues.

The protein resides in the cytoplasm. It is found in the cytoskeleton. Its subcellular location is the cell projection. It localises to the growth cone. The protein localises to the lamellipodium. The protein resides in the filopodium. Tubulin is the major constituent of microtubules, protein filaments consisting of alpha- and beta-tubulin heterodimers. Microtubules grow by the addition of GTP-tubulin dimers to the microtubule end, where a stabilizing cap forms. Below the cap, alpha-beta tubulin heterodimers are in GDP-bound state, owing to GTPase activity of alpha-tubulin. TUBB3 plays a critical role in proper axon guidance and maintenance. Binding of NTN1/Netrin-1 to its receptor UNC5C might cause dissociation of UNC5C from polymerized TUBB3 in microtubules and thereby lead to increased microtubule dynamics and axon repulsion. Plays a role in dorsal root ganglion axon projection towards the spinal cord. The chain is Tubulin beta-3 chain (TUBB3) from Homo sapiens (Human).